A 41-amino-acid polypeptide reads, in one-letter code: Chymotrypsin inhibitor (41 aa).

Inhibits chymotrypsin. This chain is Chymotrypsin inhibitor, found in Eisenia hortensis (European nightcrawler).